Consider the following 505-residue polypeptide: Calcium/calmodulin-dependent protein kinase kinase 1 (505 aa).

Residues 28–66 form a disordered region; sequence LEEADEGPEPARNGVDPPPRARAASVIPGSASRPTPVRP. Phosphoserine occurs at positions 67 and 74. Arginine 78 is subject to Asymmetric dimethylarginine. The interval 84–105 is disordered; the sequence is LGAQVGPYSTGPASHISPRSWR. The residue at position 100 (serine 100) is a Phosphoserine. Threonine 108 is subject to Phosphothreonine. A Protein kinase domain is found at 128–409; that stretch reads YKLQSEIGKG…VSDIKLHPWV (282 aa). Residues 134 to 142 and lysine 157 contribute to the ATP site; that span reads IGKGAYGVV. Positions 167 to 189 are RP domain; that stretch reads QYGFPRRPPPRGSQATQGGPAKQ. Catalysis depends on aspartate 275, which acts as the Proton acceptor. Residues 435 to 440 form an autoinhibitory domain region; the sequence is KNSVRL. Residues 438-463 are calmodulin-binding; that stretch reads VRLIPSWTTVILVKSMLRKRSFGNPF. 3 positions are modified to phosphoserine: serine 458, serine 475, and serine 492. The disordered stretch occupies residues 460 to 505; it reads GNPFEPQARREERSMSAPGSLLMKEGCGEGCKSPELPGVQEDEAAS.

This sequence belongs to the protein kinase superfamily. Ser/Thr protein kinase family. As to quaternary structure, interacts with CAMK4 and calmodulin. Post-translationally, appears to be autophosphorylated in a Ca(2+)/calmodulin-dependent manner. Phosphorylated at multiple sites by PRCAKA/PKA. Phosphorylation of Ser-458 is blocked upon binding to Ca(2+)/calmodulin. In vitro, phosphorylated by CAMK1 and CAMK4. Widely expressed. Differentially expressed in various brain regions.

The protein resides in the cytoplasm. It localises to the nucleus. The catalysed reaction is L-seryl-[protein] + ATP = O-phospho-L-seryl-[protein] + ADP + H(+). The enzyme catalyses L-threonyl-[protein] + ATP = O-phospho-L-threonyl-[protein] + ADP + H(+). With respect to regulation, activated by Ca(2+)/calmodulin. Binding of calmodulin may relieve intrasteric autoinhibition. Partially inhibited upon phosphorylation by PRCAKA/PKA. May be regulated through phosphorylation by CAMK1 and CAMK4. Functionally, calcium/calmodulin-dependent protein kinase that belongs to a proposed calcium-triggered signaling cascade involved in a number of cellular processes. Phosphorylates CAMK1, CAMK1D, CAMK1G and CAMK4. Involved in regulating cell apoptosis. Promotes cell survival by phosphorylating AKT1/PKB that inhibits pro-apoptotic BAD/Bcl2-antagonist of cell death. The polypeptide is Calcium/calmodulin-dependent protein kinase kinase 1 (Camkk1) (Mus musculus (Mouse)).